The sequence spans 876 residues: Valine--tRNA ligase (876 aa).

The short motif at 43–53 (PNVTGVLHMGH) is the 'HIGH' region element. Positions 533–537 (KMSKS) match the 'KMSKS' region motif. Lys-536 contacts ATP. Residues 804–876 (GALIDVEEEI…DSLNQLQSTK (73 aa)) are a coiled coil.

The protein belongs to the class-I aminoacyl-tRNA synthetase family. ValS type 1 subfamily. Monomer.

The protein resides in the cytoplasm. It catalyses the reaction tRNA(Val) + L-valine + ATP = L-valyl-tRNA(Val) + AMP + diphosphate. Functionally, catalyzes the attachment of valine to tRNA(Val). As ValRS can inadvertently accommodate and process structurally similar amino acids such as threonine, to avoid such errors, it has a 'posttransfer' editing activity that hydrolyzes mischarged Thr-tRNA(Val) in a tRNA-dependent manner. The chain is Valine--tRNA ligase from Porphyromonas gingivalis (strain ATCC 33277 / DSM 20709 / CIP 103683 / JCM 12257 / NCTC 11834 / 2561).